The sequence spans 1071 residues: ATP-dependent helicase/deoxyribonuclease subunit B (1071 aa).

It belongs to the helicase family. AddB/RexB type 2 subfamily. In terms of assembly, heterodimer of AddA and RexB. Mg(2+) is required as a cofactor.

Functionally, the heterodimer acts as both an ATP-dependent DNA helicase and an ATP-dependent, dual-direction single-stranded exonuclease. Recognizes the chi site generating a DNA molecule suitable for the initiation of homologous recombination. This subunit has 5' -&gt; 3' nuclease activity but not helicase activity. The chain is ATP-dependent helicase/deoxyribonuclease subunit B from Streptococcus pyogenes serotype M12 (strain MGAS9429).